The sequence spans 77 residues: Liver-expressed antimicrobial peptide 2 (77 aa).

The first 22 residues, 1-22, serve as a signal peptide directing secretion; that stretch reads MWHLKLFAVLMICLLLLAQVDG. The propeptide occupies 23–37; that stretch reads SPIPQQSSAKRRPRR. 2 disulfides stabilise this stretch: C54/C65 and C60/C70.

It belongs to the LEAP2 family.

The protein localises to the secreted. In terms of biological role, has an antimicrobial activity. The polypeptide is Liver-expressed antimicrobial peptide 2 (LEAP2) (Bos taurus (Bovine)).